Reading from the N-terminus, the 26-residue chain is Metallothionein (26 aa).

A compositionally biased stretch (low complexity) spans Met-1 to Cys-14. The segment at Met-1–Lys-26 is disordered. Cys-4, Cys-6, Cys-12, Cys-14, Cys-18, Cys-20, and Cys-23 together coordinate Cu(+). Over residues Gly-15–Lys-26 the composition is skewed to cys residues.

It belongs to the metallothionein superfamily. Type 8 family.

This chain is Metallothionein (cmt), found in Neurospora crassa (strain ATCC 24698 / 74-OR23-1A / CBS 708.71 / DSM 1257 / FGSC 987).